A 228-amino-acid polypeptide reads, in one-letter code: DNA-binding response regulator MtrA (228 aa).

Positions 7–120 (RILVVDDDAS…ELVARVRARL (114 aa)) constitute a Response regulatory domain. Aspartate 56 carries the 4-aspartylphosphate modification. A DNA-binding region (ompR/PhoB-type) is located at residues 128-227 (AEMLSIADVE…VRGVGYKAGP (100 aa)).

In terms of processing, phosphorylated by MtrB.

In terms of biological role, member of the two-component regulatory system MtrA/MtrB. The sequence is that of DNA-binding response regulator MtrA (mtrA) from Mycobacterium bovis (strain ATCC BAA-935 / AF2122/97).